We begin with the raw amino-acid sequence, 583 residues long: Aspartate--tRNA ligase (583 aa).

Glu-169 contacts L-aspartate. Positions 193 to 196 (QLFK) are aspartate. Arg-215 serves as a coordination point for L-aspartate. ATP contacts are provided by residues 215–217 (RDE) and Gln-224. Position 443 (His-443) interacts with L-aspartate. Residue Glu-477 participates in ATP binding. An L-aspartate-binding site is contributed by Arg-484. 529–532 (GIDR) is an ATP binding site.

This sequence belongs to the class-II aminoacyl-tRNA synthetase family. Type 1 subfamily. In terms of assembly, homodimer.

The protein resides in the cytoplasm. It catalyses the reaction tRNA(Asp) + L-aspartate + ATP = L-aspartyl-tRNA(Asp) + AMP + diphosphate. Catalyzes the attachment of L-aspartate to tRNA(Asp) in a two-step reaction: L-aspartate is first activated by ATP to form Asp-AMP and then transferred to the acceptor end of tRNA(Asp). The chain is Aspartate--tRNA ligase from Stenotrophomonas maltophilia (strain R551-3).